Here is a 349-residue protein sequence, read N- to C-terminus: tRNA pseudouridine synthase D (349 aa).

Phe27 contributes to the substrate binding site. The active-site Nucleophile is Asp80. Asn129 serves as a coordination point for substrate. The region spanning 155 to 303 (GVPNYFGAQR…VEAARRAMLL (149 aa)) is the TRUD domain. Phe329 provides a ligand contact to substrate.

The protein belongs to the pseudouridine synthase TruD family.

It carries out the reaction uridine(13) in tRNA = pseudouridine(13) in tRNA. In terms of biological role, responsible for synthesis of pseudouridine from uracil-13 in transfer RNAs. This Citrobacter koseri (strain ATCC BAA-895 / CDC 4225-83 / SGSC4696) protein is tRNA pseudouridine synthase D.